Reading from the N-terminus, the 456-residue chain is Decaprenyl-diphosphate synthase (456 aa).

Residues lysine 183, arginine 186, and histidine 216 each contribute to the isopentenyl diphosphate site. Mg(2+) contacts are provided by aspartate 223 and aspartate 227. Arginine 233 contacts isopentenyl diphosphate.

Belongs to the FPP/GGPP synthase family. Mg(2+) serves as cofactor.

It is found in the mitochondrion. It catalyses the reaction 7 isopentenyl diphosphate + (2E,6E)-farnesyl diphosphate = all-trans-decaprenyl diphosphate + 7 diphosphate. It functions in the pathway cofactor biosynthesis; ubiquinone biosynthesis. Its function is as follows. Supplies decaprenyl diphosphate, the precursor for the side chain of the isoprenoid quinones ubiquinone-10. The polypeptide is Decaprenyl-diphosphate synthase (coq1) (Dictyostelium discoideum (Social amoeba)).